The sequence spans 829 residues: DNA ligase (829 aa).

Residues 1-23 (MPAQTSRARPVEEMTAAQAREAH) form a disordered region. Residues 47–51 (DAEYD), 96–97 (SL), and Glu-130 contribute to the NAD(+) site. The N6-AMP-lysine intermediate role is filled by Lys-132. The NAD(+) site is built by Arg-153, Glu-190, Lys-306, and Lys-330. Zn(2+) is bound by residues Cys-453, Cys-456, Cys-477, and Cys-483. The 80-residue stretch at 750–829 (AAAAVFSGQT…AEWLAMVEAA (80 aa)) folds into the BRCT domain.

Belongs to the NAD-dependent DNA ligase family. LigA subfamily. It depends on Mg(2+) as a cofactor. The cofactor is Mn(2+).

It catalyses the reaction NAD(+) + (deoxyribonucleotide)n-3'-hydroxyl + 5'-phospho-(deoxyribonucleotide)m = (deoxyribonucleotide)n+m + AMP + beta-nicotinamide D-nucleotide.. DNA ligase that catalyzes the formation of phosphodiester linkages between 5'-phosphoryl and 3'-hydroxyl groups in double-stranded DNA using NAD as a coenzyme and as the energy source for the reaction. It is essential for DNA replication and repair of damaged DNA. The sequence is that of DNA ligase from Methylobacterium nodulans (strain LMG 21967 / CNCM I-2342 / ORS 2060).